The following is a 428-amino-acid chain: MGRSQEQGQGQGPVHSIRLSTVGATRPTETGTTHEPTGLDLAMKLHYLKAAYIYSAETARDLTVRHLKEAMFMLFDQIAWTTGRFSRRDSGRPYIKCNDCGTRFVEGQCNLTVEEWLSKPDRSVDEFLVYHHPIGPELTFSPLIYVQMTRFKCGGLGLGLSWANIIGDAFSLFYAFNLWAKAITGEKIYAPTTPSIGERRFQSPNPTVKDPVSIKRVEPVGDLWVTPNDKKLANYCFNLSVADQISPHFPAKGDDSIPVFEILAGIIWKCIAKVRVEPKPVTVTIIKKDPNDLKLNAIRNSQVISSVSVDFPVAEATVEELVKAMGEAKDERCGIEEIGESCDGNLDFVVYGAKLTFLDLTGEDLYEAKVMGKSPESVYCNVEGIGEEGLVVVYAAAKSEERVVTVTLPEEEMERVKLEFKKFGLIAP.

The disordered stretch occupies residues 1-36 (MGRSQEQGQGQGPVHSIRLSTVGATRPTETGTTHEP). Low complexity predominate over residues 21–36 (TVGATRPTETGTTHEP).

The protein belongs to the plant acyltransferase family. In terms of tissue distribution, highly expressed in leaves.

The protein localises to the cytoplasm. It is found in the cytosol. Functionally, involved in biosynthesis of the epicuticular wax. Plays a role in very-long-chain fatty acid (VLCFA) biosynthesis and is required for C30 fatty acid elongation in leaf. Despite its classification as a BAHD acyltransferase based on sequence homology, CER26 does not seem to share the catalytic mechanism of the members of the BAHD family. This is Protein ECERIFERUM 26 (CER26) from Arabidopsis thaliana (Mouse-ear cress).